Here is a 765-residue protein sequence, read N- to C-terminus: Cyanobacterial phytochrome A (765 aa).

A chromophore binding domain region spans residues isoleucine 20–arginine 510. In terms of domain architecture, GAF spans asparagine 152–glutamate 320. Cysteine 259 contributes to the a tetrapyrrole binding site. In terms of domain architecture, Histidine kinase spans valine 535 to glycine 748. The residue at position 538 (histidine 538) is a Phosphohistidine; by autocatalysis.

It in the N-terminal section; belongs to the phytochrome family. Post-translationally, contains one covalently linked tetrapyrrole chromophore.

It carries out the reaction ATP + protein L-histidine = ADP + protein N-phospho-L-histidine.. In terms of biological role, photoreceptor which exists in two forms that are reversibly interconvertible by light: the R form that absorbs maximally in the red region of the spectrum and the FR form that absorbs maximally in the far-red region. The sequence is that of Cyanobacterial phytochrome A (aphA) from Nostoc sp. (strain PCC 7120 / SAG 25.82 / UTEX 2576).